An 85-amino-acid polypeptide reads, in one-letter code: UPF0297 protein LBUL_1485 (85 aa).

The protein belongs to the UPF0297 family.

The chain is UPF0297 protein LBUL_1485 from Lactobacillus delbrueckii subsp. bulgaricus (strain ATCC BAA-365 / Lb-18).